Consider the following 507-residue polypeptide: Cell cycle serine/threonine-protein kinase hsk1 (507 aa).

A Phosphoserine modification is found at serine 22. The region spanning 68 to 433 is the Protein kinase domain; that stretch reads YRLIEKIGEG…AEEALDHDFL (366 aa). ATP contacts are provided by residues 74-82 and lysine 129; that span reads IGEGTFSSV. Aspartate 216 functions as the Proton acceptor in the catalytic mechanism. Threonine 291 bears the Phosphothreonine mark. Positions 475–507 are disordered; it reads FKEQEETDEPTSLSKRKRSIDEILPNDALQDGA. Serine 493 carries the post-translational modification Phosphoserine.

Belongs to the protein kinase superfamily. Ser/Thr protein kinase family. CDC7 subfamily. As to quaternary structure, heterodimer with the regulatory subunit him1/dfp1. May form homooligomeric complexes. Interacts with mcm10. Post-translationally, autophosphorylated. Phosphorylated by cds1 in vitro.

Its subcellular location is the nucleus. The enzyme catalyses L-seryl-[protein] + ATP = O-phospho-L-seryl-[protein] + ADP + H(+). It catalyses the reaction L-threonyl-[protein] + ATP = O-phospho-L-threonyl-[protein] + ADP + H(+). Phosphorylation of exogenous substrates activated by Dfp1. In terms of biological role, required for G1/S transition. Plays a role in DNA replication checkpoint signaling through regulating rad3 and cds1. Involved in the maintenance of mitotic chromosome structures during S phase through regulating the function of rad21. Required for initiation of mitotic DNA replication through phosphorylating mcm2/cdc19. Required for genome integrity. This Schizosaccharomyces pombe (strain 972 / ATCC 24843) (Fission yeast) protein is Cell cycle serine/threonine-protein kinase hsk1 (hsk1).